A 131-amino-acid chain; its full sequence is uncharacterized protein (131 aa).

This is an uncharacterized protein from Schizosaccharomyces pombe (strain 972 / ATCC 24843) (Fission yeast).